Here is a 291-residue protein sequence, read N- to C-terminus: MFKGSMPALVTPFRNGELDLETLKKLVEWHIGEGSNGLVPVGTTGESPTLTHKEHEVVVEEVVKAAAGRVPVIAGAGSNNTLEAIRLVRHAEAVGADAALVVTPYYNKPTQSGLIAHFTALHDCADLPIIIYNIPGRSVVDMSPETMGKLAELPRIIGVKDATGDLARVCDQRSTCGPDFMQLSGEDATAHGFNAQGGVGCISVTANVAPKLLSQMQAACLAGDYATALSIQDRLMPLHKAIFIEPGLVGVKYAMSQLDLCSEEVRLPLTALSDETRALVDAGLRHAGLMN.

Thr44 contributes to the pyruvate binding site. Tyr132 acts as the Proton donor/acceptor in catalysis. Lys160 (schiff-base intermediate with substrate) is an active-site residue. Pyruvate is bound at residue Ile202.

This sequence belongs to the DapA family. In terms of assembly, homotetramer; dimer of dimers.

The protein localises to the cytoplasm. The enzyme catalyses L-aspartate 4-semialdehyde + pyruvate = (2S,4S)-4-hydroxy-2,3,4,5-tetrahydrodipicolinate + H2O + H(+). It participates in amino-acid biosynthesis; L-lysine biosynthesis via DAP pathway; (S)-tetrahydrodipicolinate from L-aspartate: step 3/4. In terms of biological role, catalyzes the condensation of (S)-aspartate-beta-semialdehyde [(S)-ASA] and pyruvate to 4-hydroxy-tetrahydrodipicolinate (HTPA). The protein is 4-hydroxy-tetrahydrodipicolinate synthase of Roseobacter denitrificans (strain ATCC 33942 / OCh 114) (Erythrobacter sp. (strain OCh 114)).